Reading from the N-terminus, the 928-residue chain is Nuclear pore complex-interacting protein family member B12 (928 aa).

The chain crosses the membrane as a helical span at residues 73-93; that stretch reads VVITLWIVYLWVSLLKTIFWS. Disordered regions lie at residues 242-452 and 663-928; these read RMGH…NIKT and ERLR…RRLS. Residues 252–263 are compositionally biased toward polar residues; it reads QQHSITDNSLSL. The segment covering 349–359 has biased composition (pro residues); the sequence is PLPPSAPPSAP. Basic and acidic residues-rich tracts occupy residues 406–416, 698–708, 740–750, and 782–792; these read DNIKTPAERLR.

The protein belongs to the NPIP family.

The protein resides in the membrane. In Homo sapiens (Human), this protein is Nuclear pore complex-interacting protein family member B12.